The primary structure comprises 429 residues: Serine--tRNA ligase (429 aa).

L-serine is bound at residue 236-238 (TGE). Position 267-269 (267-269 (RSE)) interacts with ATP. Glu290 is an L-serine binding site. Residue 354–357 (EISS) coordinates ATP. Ser390 contacts L-serine.

Belongs to the class-II aminoacyl-tRNA synthetase family. Type-1 seryl-tRNA synthetase subfamily. As to quaternary structure, homodimer. The tRNA molecule binds across the dimer.

Its subcellular location is the cytoplasm. The enzyme catalyses tRNA(Ser) + L-serine + ATP = L-seryl-tRNA(Ser) + AMP + diphosphate + H(+). The catalysed reaction is tRNA(Sec) + L-serine + ATP = L-seryl-tRNA(Sec) + AMP + diphosphate + H(+). It functions in the pathway aminoacyl-tRNA biosynthesis; selenocysteinyl-tRNA(Sec) biosynthesis; L-seryl-tRNA(Sec) from L-serine and tRNA(Sec): step 1/1. In terms of biological role, catalyzes the attachment of serine to tRNA(Ser). Is also able to aminoacylate tRNA(Sec) with serine, to form the misacylated tRNA L-seryl-tRNA(Sec), which will be further converted into selenocysteinyl-tRNA(Sec). This is Serine--tRNA ligase from Vesicomyosocius okutanii subsp. Calyptogena okutanii (strain HA).